Here is a 206-residue protein sequence, read N- to C-terminus: Large ribosomal subunit protein uL13x (206 aa).

The protein belongs to the universal ribosomal protein uL13 family.

The sequence is that of Large ribosomal subunit protein uL13x (RPL13AC) from Arabidopsis thaliana (Mouse-ear cress).